The chain runs to 605 residues: DNA primase (605 aa).

The segment at 38 to 62 adopts a CHC2-type zinc-finger fold; it reads CPFHDEKTPSFTVSEDKQICHCFGC. In terms of domain architecture, Toprim spans 260–341; the sequence is DEIVLLEGFM…NVFVIQLPSG (82 aa). Mg(2+) contacts are provided by E266, D310, and D312.

This sequence belongs to the DnaG primase family. In terms of assembly, monomer. Interacts with DnaB. Zn(2+) is required as a cofactor. Requires Mg(2+) as cofactor.

It carries out the reaction ssDNA + n NTP = ssDNA/pppN(pN)n-1 hybrid + (n-1) diphosphate.. RNA polymerase that catalyzes the synthesis of short RNA molecules used as primers for DNA polymerase during DNA replication. The sequence is that of DNA primase from Staphylococcus aureus (strain MW2).